The primary structure comprises 2195 residues: MNRAKPTTVRRPSAAAKPSGHPPPGDFIALGSKGQASESKTTSTLLKPAPSGLPSERKRDASASLSGTSALTGLTKRPKLSSTPPLSALGRLAEAAVAEKRAISPSIKEPSVVPIEVLPTVLLDEIEAAELEGNDDRIEGVLCGAVKQLKVTRAKPDSTLYLSLMYLAKIKPNIFATEGVIEALCSLLRRDASVNFKAKGNSLVSVLACNLLMAAYEEDENWPEIFVKVYIEDSLGERIWVDSPHCRTFVDNIQTAFNTKMPPKSVLLQGEGARSGGELGAGSSPHPSLTEEEDSQTELLIAEEKLSPEQEGQLMPRPRYDELTESVEEYVLDMLRDQLNRRQPIDNVSRNLLRLLTATCGYKEVRLLAVQRLEMWLQNPKLTRPAQDLLMSVCMNCNSHGSEDMDVISHLIKIRLKPKVLLNHYMLCIRELLNAHKDNLGTTIKFVIFNELSNARNPNNMQILYTVLQHSSELAPKFLAMVFQDLLTNKDDYLRASRALLREIIKQTKHEINFQAFCLGLMQERKEPQYLEMEFKERFVVHITDVLAVSMMLGITAQVKEAGVAWDKGEKRNLEVLRTFQNQIAAIQRDAVWWLHTVVPSVSKLAPKDYVHCLHKVLFTEQPETYYKWDNWPPESDRNFFLRLCSEVPILEDTLMRVLVIGLSRELPLGPADAMELADHLVKRAAAVQADDVEVLKVERIQLIDAVLNLCTYHHPENIQLPPGYQPPNLAISTLYWKAWPLLLVVAAFNPENIGLAAWEEYPTLKMLMEMVMTNNYSYPPCTLTDEETRTEMINRELQISQREKQEILAFEGHLAAASTKQTITESSSLLLSQLTSLDPQGPPRRPPPHILDQVKALNQSLRLGHLLCRSRNPDFLLHIIQRQASSQSMPWLADLVQSSEGSLDVLPVQCLCEFLLHDAADSTASGEEDDEGESREQKAKKRQRQQKQRQLLGRLQDLLLGPKADEQTTCEVLDYFLRRLGSSQVASRVLAMKGLSLVLSEGGLRDKEEKEPPMEEDIGETDALQGYQWLLRDLPRLPLFDSVRTTTALALQQAIHMETDPQTISAYLIYLSQHTPVEEQGPHSDLALDVARLVVERSTIMAHLFSKPSCSTASDAVLSALLSVFSRYVRRMRKSKEGEEVYSWSESQDQVFLRWSSGETATMHILVVHAMVILLTLGPPRSGDSEFSELLDIWFPEKKPLPTAFLVDTSEEALLLPDWLKLRMIRSEVPRLVDAALQDLEPQQLLLFVQSFGIPVSSMSKLLQYLDQAVAQDPQTLEQNIMDKNYMAHLVEVQHERGASGGQTFHSLLTASLPPRRDSTEAPKPESSPEPPPGQGRTRAGTQVPVLGPEDDLAGIFLQIFPLSPDPRWQSSSPRPLALALQQALGQELARVRQGNPEVPGITVRLLQAMTTLLSSPHGGTLALAMHHSHFLSCPLMRQLYQYQRAVPQDTGFSSLFLKVLMQILQWLDSPAVEDGPLQAQLKLFATRYSARHRISDVRSGLLHLADALSFHGDLEVANSTARAVIATLRSGEKCPVEPELISKVLRGLIEVRSPHLEELLTALFSATTETSCPSPASGPIVVVSSLLLQEKEELLGPSKQEVEGASTEAMRLGPASGLLVDWLETLDPEVVCSCPDLQWKLLFSRRKGKGHISAQVLSFRPYLLALLTHQASWSTLHCCIRVLLGKSREQRLDPSASLDFLWACIHVPRIWQGRDQRTPQKRREELVLHVQGPELLSLVELILSEAETRSQDGDSAARTLIQTRLPLLLSCCRSNDESIGKVTEHLTSCIQQWGDSVLGQRCRDLLLQLYLQRPEVRVPVPEVLLQSEGATSSSICKLDGLVHRFITLLADTSDSRSSESRVADANMACRKLAVAHPVLLLRHLPMIAALLHGRTHLNFQEFRQQNHLAFFLHVLGILELLQPRVFQSEHQGALWDCLRSFIRLLLNYRKSSRHLAPFISKFVQFIHKYVGCSAPAAVAFLQKHAEPLHDLSFDNSDLVMLKSLLAGLSLPSRDGRTDQGLDEEGEDERSAGSLPLVSVSLSTPLTVADVAPHMKRLSRGRAVEDVLETLSDIDEMSRRRPEVLGFFSTNLQRLMSSAEESCRNLAFSLALRSIQNNPSIAADFLPTFMYCLGSRDFEVVQTALRNLPEYTLLCQEHAAVLLHRAFLVGVYGQIDTSAQISEALKILHMEAVM.

The tract at residues 1–86 (MNRAKPTTVR…RPKLSSTPPL (86 aa)) is disordered. Ser-13 carries the phosphoserine modification. The segment covering 34–45 (GQASESKTTSTL) has biased composition (polar residues). At Lys-47 the chain carries N6-acetyllysine. Residues 62 to 75 (SASLSGTSALTGLT) show a composition bias toward low complexity. The residue at position 83 (Thr-83) is a Phosphothreonine. Ser-87 is modified (phosphoserine). Positions 267–297 (LLQGEGARSGGELGAGSSPHPSLTEEEDSQT) are disordered. 2 positions are modified to phosphoserine: Ser-307 and Ser-926. The disordered stretch occupies residues 923–947 (STASGEEDDEGESREQKAKKRQRQQ). Residues 1165-1185 (HILVVHAMVILLTLGPPRSGD) traverse the membrane as a helical segment. The interval 1313 to 1347 (SLPPRRDSTEAPKPESSPEPPPGQGRTRAGTQVPV) is disordered. The segment covering 1316 to 1325 (PRRDSTEAPK) has biased composition (basic and acidic residues). Phosphoserine is present on residues Ser-1320, Ser-1328, and Ser-1329.

The protein belongs to the Integrator subunit 1 family. Component of the Integrator complex, composed of core subunits INTS1, INTS2, INTS3, INTS4, INTS5, INTS6, INTS7, INTS8, INTS9/RC74, INTS10, INTS11/CPSF3L, INTS12, INTS13, INTS14 and INTS15. The core complex associates with protein phosphatase 2A subunits PPP2CA and PPP2R1A, to form the Integrator-PP2A (INTAC) complex. Interacts with ESRRB, ESRRB is not a core component of the Integrator complex and this association is a bridge for the interaction with the multiprotein complex Integrator; attracts the transcriptional machinery.

It is found in the nucleus. Its subcellular location is the nucleus membrane. In terms of biological role, component of the integrator complex, a multiprotein complex that terminates RNA polymerase II (Pol II) transcription in the promoter-proximal region of genes. The integrator complex provides a quality checkpoint during transcription elongation by driving premature transcription termination of transcripts that are unfavorably configured for transcriptional elongation: the complex terminates transcription by (1) catalyzing dephosphorylation of the C-terminal domain (CTD) of Pol II subunit POLR2A/RPB1 and SUPT5H/SPT5, (2) degrading the exiting nascent RNA transcript via endonuclease activity and (3) promoting the release of Pol II from bound DNA. The integrator complex is also involved in terminating the synthesis of non-coding Pol II transcripts, such as enhancer RNAs (eRNAs), small nuclear RNAs (snRNAs), telomerase RNAs and long non-coding RNAs (lncRNAs). Within the integrator complex, INTS1 is involved in the post-termination step: INTS1 displaces INTS3 and the SOSS factors, allowing the integrator complex to return to the closed conformation, ready to bind to the paused elongation complex for another termination cycle. Mediates recruitment of cytoplasmic dynein to the nuclear envelope, probably as component of the integrator complex. The protein is Integrator complex subunit 1 of Mus musculus (Mouse).